We begin with the raw amino-acid sequence, 368 residues long: tRNA/tmRNA (uracil-C(5))-methyltransferase (368 aa).

5 residues coordinate S-adenosyl-L-methionine: Q192, Y220, N225, E241, and D301. Catalysis depends on C326, which acts as the Nucleophile. Catalysis depends on E360, which acts as the Proton acceptor.

Belongs to the class I-like SAM-binding methyltransferase superfamily. RNA M5U methyltransferase family. TrmA subfamily.

The enzyme catalyses uridine(54) in tRNA + S-adenosyl-L-methionine = 5-methyluridine(54) in tRNA + S-adenosyl-L-homocysteine + H(+). It carries out the reaction uridine(341) in tmRNA + S-adenosyl-L-methionine = 5-methyluridine(341) in tmRNA + S-adenosyl-L-homocysteine + H(+). Functionally, dual-specificity methyltransferase that catalyzes the formation of 5-methyluridine at position 54 (m5U54) in all tRNAs, and that of position 341 (m5U341) in tmRNA (transfer-mRNA). In Actinobacillus pleuropneumoniae serotype 3 (strain JL03), this protein is tRNA/tmRNA (uracil-C(5))-methyltransferase.